The sequence spans 312 residues: Formimidoylglutamase (312 aa).

Mn(2+) is bound by residues His-123, Asp-152, His-154, Asp-156, Cys-243, and Asp-245.

The protein belongs to the arginase family. Mn(2+) serves as cofactor.

The catalysed reaction is N-formimidoyl-L-glutamate + H2O = formamide + L-glutamate. It functions in the pathway amino-acid degradation; L-histidine degradation into L-glutamate; L-glutamate from N-formimidoyl-L-glutamate (hydrolase route): step 1/1. Functionally, catalyzes the conversion of N-formimidoyl-L-glutamate to L-glutamate and formamide. The protein is Formimidoylglutamase of Pseudomonas fluorescens (strain ATCC BAA-477 / NRRL B-23932 / Pf-5).